Consider the following 121-residue polypeptide: MQKSRNYYRKAKHVRILKKLKSNREDKQKYRIGIYKSLRNFYAYIFDPWKNKVITSVSTLDKSNGYKGNIVSASSLAPDLYKKMKKLNLENESYIFDRGGYLFHGRVKAFANALRDQGVKF.

It belongs to the universal ribosomal protein uL18 family. In terms of assembly, part of the 50S ribosomal subunit; part of the 5S rRNA/L5/L18/L25 subcomplex. Contacts the 5S and 23S rRNAs.

Functionally, this is one of the proteins that bind and probably mediate the attachment of the 5S RNA into the large ribosomal subunit, where it forms part of the central protuberance. The sequence is that of Large ribosomal subunit protein uL18 from Mesomycoplasma hyopneumoniae (strain J / ATCC 25934 / NCTC 10110) (Mycoplasma hyopneumoniae).